Consider the following 201-residue polypeptide: ATP-dependent Clp protease proteolytic subunit 2 (201 aa).

Residue Ser98 is the Nucleophile of the active site. The active site involves His123.

The protein belongs to the peptidase S14 family. In terms of assembly, fourteen ClpP subunits assemble into 2 heptameric rings which stack back to back to give a disk-like structure with a central cavity, resembling the structure of eukaryotic proteasomes.

The protein resides in the cytoplasm. The catalysed reaction is Hydrolysis of proteins to small peptides in the presence of ATP and magnesium. alpha-casein is the usual test substrate. In the absence of ATP, only oligopeptides shorter than five residues are hydrolyzed (such as succinyl-Leu-Tyr-|-NHMec, and Leu-Tyr-Leu-|-Tyr-Trp, in which cleavage of the -Tyr-|-Leu- and -Tyr-|-Trp bonds also occurs).. In terms of biological role, cleaves peptides in various proteins in a process that requires ATP hydrolysis. Has a chymotrypsin-like activity. Plays a major role in the degradation of misfolded proteins. This chain is ATP-dependent Clp protease proteolytic subunit 2, found in Pseudomonas aeruginosa (strain ATCC 15692 / DSM 22644 / CIP 104116 / JCM 14847 / LMG 12228 / 1C / PRS 101 / PAO1).